We begin with the raw amino-acid sequence, 619 residues long: Laccase (619 aa).

A signal peptide spans Met-1 to Gly-21. Residues Ala-22–Gly-49 constitute a propeptide that is removed on maturation. A disulfide bond links Cys-55 and Cys-63. Plastocyanin-like domains follow at residues Thr-84–Asn-207 and Val-216–Asn-373. Asn-139 carries N-linked (GlcNAc...) asparagine glycosylation. Cu cation contacts are provided by His-144, His-146, His-189, and His-191. 2 disulfides stabilise this stretch: Cys-165-Cys-586 and Cys-349-Cys-383. 3 N-linked (GlcNAc...) asparagine glycosylation sites follow: Asn-282, Asn-295, and Asn-340. Residues Asn-422 and Asn-444 are each glycosylated (N-linked (GlcNAc...) asparagine). One can recognise a Plastocyanin-like 3 domain in the interval Asn-431–Arg-566. Positions 477, 480, 482, 548, 549, 550, and 554 each coordinate Cu cation. A propeptide spanning residues Arg-607–Trp-619 is cleaved from the precursor.

It belongs to the multicopper oxidase family. Cu cation is required as a cofactor.

The protein localises to the secreted. The catalysed reaction is 4 hydroquinone + O2 = 4 benzosemiquinone + 2 H2O. Its function is as follows. Lignin degradation and detoxification of lignin-derived products. This Neurospora crassa (strain ATCC 24698 / 74-OR23-1A / CBS 708.71 / DSM 1257 / FGSC 987) protein is Laccase (lacc).